Consider the following 427-residue polypeptide: Peptidase B (427 aa).

The Mn(2+) site is built by lysine 195 and aspartate 200. The active site involves lysine 207. Mn(2+) is bound by residues aspartate 218, aspartate 277, and glutamate 279. Residue arginine 281 is part of the active site.

The protein belongs to the peptidase M17 family. As to quaternary structure, homohexamer. Mn(2+) is required as a cofactor.

The protein localises to the cytoplasm. It carries out the reaction Release of an N-terminal amino acid, Xaa, from a peptide or arylamide. Xaa is preferably Glu or Asp but may be other amino acids, including Leu, Met, His, Cys and Gln.. In terms of biological role, probably plays an important role in intracellular peptide degradation. The sequence is that of Peptidase B from Salmonella agona (strain SL483).